The sequence spans 155 residues: Ribonuclease H (155 aa).

The 142-residue stretch at 4–145 (TEPTVYAYTD…ADRLANRGID (142 aa)) folds into the RNase H type-1 domain. Mg(2+)-binding residues include D13, E51, D73, and D137.

This sequence belongs to the RNase H family. As to quaternary structure, monomer. It depends on Mg(2+) as a cofactor.

The protein resides in the cytoplasm. It catalyses the reaction Endonucleolytic cleavage to 5'-phosphomonoester.. Endonuclease that specifically degrades the RNA of RNA-DNA hybrids. This chain is Ribonuclease H, found in Methylococcus capsulatus (strain ATCC 33009 / NCIMB 11132 / Bath).